The sequence spans 474 residues: MNFSQIAQQVIDKLGGKDNISAAAHCATRLRIVVKNENLIDKKGIENIEGVKGQFAVAGQYQIIFGSGTVNKVYAALSKLLGIGDMTTSEVAAAGTEKQGLLQRLVKGLADIFVPIIPAIVAGGLLMGIHSMLTAKGFFVEEKNVVDLYPAIADLVDFINTIANAPFVFLPVLLGFSATRKFGGNPFLGAALGMLLVHPALSDGWNYALTLAKGNIQYWHIFGLEIERVGYQGTVIPVLVASWVLATLEKNLRKVVPSFLDNLITPLFALFITGLLAFTVIGPIGREAGSLISTGLTWLYDTLGFVGGAIFGTLYAPIVITGMHQTFIAVETQLLAEVARTGGTFIFPIAAMSNIAQGAACLGAAYVMKDAKVRGIAVPSGISALLGITEPAMFGVNLRYRYPFISAMIGAGISSAVIALFNVKAIALGAAGLPGIPSIKPDSLAMYCVGMLISASIAFTLTVILGKRAQLKAE.

Positions 4-87 constitute a PTS EIIB type-1 domain; that stretch reads SQIAQQVIDK…SKLLGIGDMT (84 aa). The active-site Phosphocysteine intermediate; for EIIB activity is C26. One can recognise a PTS EIIC type-1 domain in the interval 107-474; it reads KGLADIFVPI…LGKRAQLKAE (368 aa). The next 10 helical transmembrane spans lie at 109 to 129, 158 to 178, 182 to 202, 229 to 249, 264 to 284, 303 to 323, 345 to 365, 376 to 396, 403 to 423, and 444 to 464; these read LADI…LMGI, FINT…GFSA, FGGN…PALS, VGYQ…ATLE, ITPL…IGPI, LGFV…ITGM, FIFP…LGAA, IAVP…MFGV, PFIS…LFNV, and LAMY…LTVI.

The protein resides in the cell inner membrane. The enzyme catalyses N(pros)-phospho-L-histidyl-[protein](out) + sucrose = sucrose 6(G)-phosphate(in) + L-histidyl-[protein]. The phosphoenolpyruvate-dependent sugar phosphotransferase system (sugar PTS), a major carbohydrate active transport system, catalyzes the phosphorylation of incoming sugar substrates concomitantly with their translocation across the cell membrane. This system is involved in sucrose transport. This Pasteurella multocida (strain Pm70) protein is PTS system sucrose-specific EIIBC component (scrA).